The chain runs to 182 residues: RFKKIRRLGALPGLTSKRPRSGIDLKNQLRSGKRSQYRIRLEEKQKLRFHYGLTERQLLKYVHIAGKAKGSTGQVLLQLLEMRLDNILFRLGMASTIPGARQLVNHRHILVNGRIVDIPSYRCKPRDIITTKDKERSKVLIQNYIASSPHAELPNHLIIDPLQYKGLVNQIIDSKWIGLKIN.

The region spanning 82–143 is the S4 RNA-binding domain; that stretch reads MRLDNILFRL…KERSKVLIQN (62 aa).

This sequence belongs to the universal ribosomal protein uS4 family. Part of the 30S ribosomal subunit. Contacts protein S5. The interaction surface between S4 and S5 is involved in control of translational fidelity.

It localises to the plastid. The protein localises to the chloroplast. In terms of biological role, one of the primary rRNA binding proteins, it binds directly to 16S rRNA where it nucleates assembly of the body of the 30S subunit. Its function is as follows. With S5 and S12 plays an important role in translational accuracy. In Alophia veracruzana (Mexican pine woods lily), this protein is Small ribosomal subunit protein uS4c (rps4).